Reading from the N-terminus, the 314-residue chain is ATP synthase gamma chain (314 aa).

This sequence belongs to the ATPase gamma chain family. In terms of assembly, F-type ATPases have 2 components, CF(1) - the catalytic core - and CF(0) - the membrane proton channel. CF(1) has five subunits: alpha(3), beta(3), gamma(1), delta(1), epsilon(1). CF(0) has three main subunits: a, b and c.

Its subcellular location is the cellular thylakoid membrane. Functionally, produces ATP from ADP in the presence of a proton gradient across the membrane. The gamma chain is believed to be important in regulating ATPase activity and the flow of protons through the CF(0) complex. This Crocosphaera subtropica (strain ATCC 51142 / BH68) (Cyanothece sp. (strain ATCC 51142)) protein is ATP synthase gamma chain.